Reading from the N-terminus, the 477-residue chain is Ribulose bisphosphate carboxylase large chain (477 aa).

The propeptide occupies 1-2 (MS). P3 carries the post-translational modification N-acetylproline. K14 carries the N6,N6,N6-trimethyllysine modification. Residues N123 and T173 each coordinate substrate. The Proton acceptor role is filled by K175. K177 lines the substrate pocket. Mg(2+)-binding residues include K201, D203, and E204. K201 is modified (N6-carboxylysine). Residue H294 is the Proton acceptor of the active site. The substrate site is built by R295, H327, and S379.

The protein belongs to the RuBisCO large chain family. Type I subfamily. Heterohexadecamer of 8 large chains and 8 small chains; disulfide-linked. The disulfide link is formed within the large subunit homodimers. It depends on Mg(2+) as a cofactor. Post-translationally, the disulfide bond which can form in the large chain dimeric partners within the hexadecamer appears to be associated with oxidative stress and protein turnover.

Its subcellular location is the plastid. It localises to the chloroplast. It catalyses the reaction 2 (2R)-3-phosphoglycerate + 2 H(+) = D-ribulose 1,5-bisphosphate + CO2 + H2O. It carries out the reaction D-ribulose 1,5-bisphosphate + O2 = 2-phosphoglycolate + (2R)-3-phosphoglycerate + 2 H(+). In terms of biological role, ruBisCO catalyzes two reactions: the carboxylation of D-ribulose 1,5-bisphosphate, the primary event in carbon dioxide fixation, as well as the oxidative fragmentation of the pentose substrate in the photorespiration process. Both reactions occur simultaneously and in competition at the same active site. The sequence is that of Ribulose bisphosphate carboxylase large chain from Nicotiana sylvestris (Wood tobacco).